Reading from the N-terminus, the 299-residue chain is Phosphatidylcholine-sterol acyltransferase (299 aa).

N-linked (GlcNAc...) asparagine glycosylation is found at Asn28 and Asn184. Cys225 and Cys268 form a disulfide bridge. The active-site Charge relay system is Asp257. Asn285 carries an N-linked (GlcNAc...) asparagine glycan. Catalysis depends on His289, which acts as the Charge relay system. Residue Asn296 is glycosylated (N-linked (GlcNAc...) asparagine).

Belongs to the AB hydrolase superfamily. Lipase family.

It is found in the secreted. The enzyme catalyses a sterol + a 1,2-diacyl-sn-glycero-3-phosphocholine = a sterol ester + a 1-acyl-sn-glycero-3-phosphocholine. APOA1 is the most potent activator in plasma. Also activated by APOE, APOC1 and APOA4. Its function is as follows. Central enzyme in the extracellular metabolism of plasma lipoproteins. Synthesized mainly in the liver and secreted into plasma where it converts cholesterol and phosphatidylcholines (lecithins) to cholesteryl esters and lysophosphatidylcholines on the surface of high and low density lipoproteins (HDLs and LDLs). The cholesterol ester is then transported back to the liver. Has a preference for plasma 16:0-18:2 or 18:O-18:2 phosphatidylcholines. Also produced in the brain by primary astrocytes, and esterifies free cholesterol on nascent APOE-containing lipoproteins secreted from glia and influences cerebral spinal fluid (CSF) APOE- and APOA1 levels. Together with APOE and the cholesterol transporter ABCA1, plays a key role in the maturation of glial-derived, nascent lipoproteins. Required for remodeling high-density lipoprotein particles into their spherical forms. This chain is Phosphatidylcholine-sterol acyltransferase (LCAT), found in Micromys minutus (European harvest mouse).